We begin with the raw amino-acid sequence, 118 residues long: Membrane-anchored ubiquitin-fold protein 3 (118 aa).

The Ubiquitin-like domain occupies 7-73; that stretch reads IDIKFRLYDG…LENNKTVGQC (67 aa). Cys-113 carries S-palmitoyl cysteine lipidation. Cys-115 is subject to Cysteine methyl ester. Cys-115 carries the S-geranylgeranyl cysteine lipid modification. Residues 116-118 constitute a propeptide, removed in mature form; that stretch reads TIL.

As to expression, ubiquitous, but three fold higher expression in senescing leaves.

It localises to the cell membrane. May serve as docking site to facilitate the association of other proteins to the plasma membrane. The sequence is that of Membrane-anchored ubiquitin-fold protein 3 (MUB3) from Arabidopsis thaliana (Mouse-ear cress).